Reading from the N-terminus, the 1364-residue chain is Outer kinetochore KNL1 complex subunit spc7 (1364 aa).

Residues 1-15 show a composition bias toward polar residues; it reads MPTSPRRNSIATTDN. Disordered stretches follow at residues 1–36, 124–190, and 202–223; these read MPTS…GALQ, YPKD…DIAS, and EALN…LSIQ. Residues 124–136 are compositionally biased toward basic and acidic residues; it reads YPKDHQSDSEKST. Residues 157 to 169 show a composition bias toward polar residues; that stretch reads GPTTTSFSRNETQ. Residues 170–181 are compositionally biased toward low complexity; that stretch reads SSPHSHSASIIS. Positions 254–257 match the MELT; degenerate motif; it reads MDLT. Thr257 is subject to Phosphothreonine; by mph1. The interval 289–334 is disordered; that stretch reads ASHDPSNQTQLSSPNKSSSPTSIEISDFSKNNENHDQSENKEEEED. Low complexity predominate over residues 300 to 310; it reads SSPNKSSSPTS. Over residues 318 to 328 the composition is skewed to basic and acidic residues; it reads KNNENHDQSEN. The MELT; degenerate motif lies at 450 to 453; it reads MDLT. At Thr453 the chain carries Phosphothreonine; by mph1. The disordered stretch occupies residues 456-503; the sequence is ISSTNAPTHLNEDDLNQFTSNISSSSKPRKDNNKTANSSKPIPDSEDF. Positions 471–481 are enriched in polar residues; it reads NQFTSNISSSS. The MELT; degenerate motif lies at 504–507; it reads MDIT. Phosphothreonine; by mph1 is present on Thr507. Disordered regions lie at residues 564-643 and 697-837; these read LPSA…SSFD and GATP…GVSN. The segment covering 566-585 has biased composition (basic and acidic residues); that stretch reads SADKENAEREEIPSYSDKSE. A compositionally biased stretch (polar residues) spans 586 to 617; sequence NFNTTSFTNHERSPNGNNNLKFSKDPNSSSPS. Basic and acidic residues predominate over residues 719 to 730; it reads EVSRQPTDDKGE. Positions 747–773 are enriched in polar residues; sequence LTIQQTNEIKHVPTNTTSSVKLPQQPS. Basic and acidic residues predominate over residues 791 to 802; it reads SLERLESQEPNR. The span at 808 to 820 shows a compositional bias: polar residues; it reads VGSSNAGNTTSVG. Residues 1075–1155 are a coiled coil; it reads LAQAQEKLEK…EEQLLNLKNE (81 aa). The Nuclear localization signal motif lies at 1091-1105; sequence RRRRLLSEKEERRKE.

As to quaternary structure, component of the KNL1/SPC105 complex composed of at least spc7 and sos7. Part of the outer kinetochore KMN network that includes the KNL1, MIS12 and NDC80 complexes. Interacts (via C-terminus) with sos7 (via C-terminus); the interaction is direct. Interacts (when phosphorylated on MELT motifs) with bub1 and bub3; to recruit the BUB1-BUB3 complex to the kinetochore. Post-translationally, phosphorylation of threonine residues in the MELT motifs by mph1/mps1 leads to recruitment of bub1 and bub3 to the kinetochore, and is required to maintain spindle assembly checkpoint signaling.

It is found in the nucleus. Its subcellular location is the chromosome. The protein localises to the centromere. It localises to the kinetochore. Functionally, acts as a component of the outer kinetochore KNL1 complex that serves as a docking point for spindle assembly checkpoint components and mediates microtubule-kinetochore interactions. Kinetochores, consisting of a centromere-associated inner segment and a microtubule-contacting outer segment, play a crucial role in chromosome segregation by mediating the physical connection between centromeric DNA and spindle microtubules. The outer kinetochore is made up of the ten-subunit KMN network, comprising the MIS12, NDC80 and KNL1 complexes, and auxiliary microtubule-associated components; together they connect the outer kinetochore with the inner kinetochore, bind microtubules, and mediate interactions with mitotic checkpoint proteins that delay anaphase until chromosomes are bioriented on the spindle. Recruits the BUB1-BUB3 complex to kinetochores when phosphorylated by mph1/mps1, to support spindle assembly checkpoint signaling. Functions both in mitotic and in meiotic chromosome segregation. The protein is Outer kinetochore KNL1 complex subunit spc7 of Schizosaccharomyces pombe (strain 972 / ATCC 24843) (Fission yeast).